Here is a 240-residue protein sequence, read N- to C-terminus: DNA repair protein RecO (240 aa).

It belongs to the RecO family.

Functionally, involved in DNA repair and RecF pathway recombination. This is DNA repair protein RecO from Actinobacillus pleuropneumoniae serotype 3 (strain JL03).